The sequence spans 387 residues: 3-ketoacyl-CoA thiolase (387 aa).

C91 (acyl-thioester intermediate) is an active-site residue. Catalysis depends on proton acceptor residues H343 and C373.

The protein belongs to the thiolase-like superfamily. Thiolase family. Heterotetramer of two alpha chains (FadB) and two beta chains (FadA).

It localises to the cytoplasm. The enzyme catalyses an acyl-CoA + acetyl-CoA = a 3-oxoacyl-CoA + CoA. It functions in the pathway lipid metabolism; fatty acid beta-oxidation. Functionally, catalyzes the final step of fatty acid oxidation in which acetyl-CoA is released and the CoA ester of a fatty acid two carbons shorter is formed. This chain is 3-ketoacyl-CoA thiolase, found in Shewanella loihica (strain ATCC BAA-1088 / PV-4).